Reading from the N-terminus, the 321-residue chain is Chlorohydroquinone/hydroquinone 1,2-dioxygenase (321 aa).

2 VOC domains span residues 10–138 and 160–282; these read GLHH…IIEQ and GFHS…ASVT. Fe cation-binding residues include H162, H229, and E278.

The protein belongs to the extradiol ring-cleavage dioxygenase family. The cofactor is Fe(2+).

It catalyses the reaction hydroquinone + O2 = (2E,4Z)-4-hydroxy-6-oxohexa-2,4-dienoate + H(+). The catalysed reaction is chlorohydroquinone + O2 = 5-chlorocarbonyl-4-hydroxy-penta-2,4-dienoate + H(+). It functions in the pathway xenobiotic degradation; gamma-hexachlorocyclohexane degradation. Functionally, cleaves aromatic rings with two hydroxyl groups at para positions with consumption of O(2). Catalyzes the cleavage of chlorohydroquinone (CHQ), as part of the gamma-hexachlorocyclohexane (gamma-HCH or lindane) degradation pathway, producing 5-chlorocarbonyl-4-hydroxy-penta-2,4-dienoate as an intermediate product that can react with water yielding maleylacetate. This degradation pathway allows S.japonicum UT26 to grow on gamma-HCH as the sole source of carbon and energy. Can also use hydroquinone (HQ) as substrate, leading to gamma-hydroxymuconic semialdehyde. Is not able to convert catechol, contrary to meta-cleavage dioxygenases. The chain is Chlorohydroquinone/hydroquinone 1,2-dioxygenase from Sphingobium indicum (strain DSM 16413 / CCM 7287 / MTCC 6362 / UT26 / NBRC 101211 / UT26S) (Sphingobium japonicum).